A 482-amino-acid chain; its full sequence is Aspartic proteinase 36 (482 aa).

The N-terminal stretch at Met1–Gly27 is a signal peptide. A glycan (N-linked (GlcNAc...) asparagine) is linked at Asn32. The Peptidase A1 domain occupies Tyr78–Ala429. Residue Asp96 is part of the active site. N-linked (GlcNAc...) asparagine glycans are attached at residues Asn178, Asn204, and Asn226. Residue Asp310 is part of the active site. The cysteines at positions 347 and 388 are disulfide-linked. An N-linked (GlcNAc...) asparagine glycan is attached at Asn432. The GPI-anchor amidated serine moiety is linked to residue Ser456. A propeptide spans Ala457 to Ser482 (removed in mature form). A glycan (N-linked (GlcNAc...) asparagine) is linked at Asn463.

It belongs to the peptidase A1 family. Highly expressed in pollen and pollen tubes. Mostly expressed in roots, flowers and inflorescence, and at lower levels in stems, seedlings and siliques.

Its subcellular location is the cell membrane. It localises to the cytoplasm. The protein localises to the cytosol. In terms of biological role, displays aspartic proteolytic activity. Together with A39, contributes to pollen and ovule development, including the apical cell wall constitution of the growing pollen tubes. The protein is Aspartic proteinase 36 of Arabidopsis thaliana (Mouse-ear cress).